The sequence spans 287 residues: ATP synthase subunit a (287 aa).

6 consecutive transmembrane segments (helical) span residues 38 to 58 (DSMV…WTAA), 96 to 116 (FIAP…AMDM), 139 to 161 (VVPT…LRFW), 187 to 207 (PLFA…EYVA), 225 to 245 (LVFM…SGVL), and 259 to 279 (LFHI…ALIY).

Belongs to the ATPase A chain family. F-type ATPases have 2 components, CF(1) - the catalytic core - and CF(0) - the membrane proton channel. CF(1) has five subunits: alpha(3), beta(3), gamma(1), delta(1), epsilon(1). CF(0) has three main subunits: a(1), b(2) and c(9-12). The alpha and beta chains form an alternating ring which encloses part of the gamma chain. CF(1) is attached to CF(0) by a central stalk formed by the gamma and epsilon chains, while a peripheral stalk is formed by the delta and b chains.

It is found in the cell inner membrane. Functionally, key component of the proton channel; it plays a direct role in the translocation of protons across the membrane. This Verminephrobacter eiseniae (strain EF01-2) protein is ATP synthase subunit a.